The sequence spans 601 residues: Nuclear envelope protein ndc1 (601 aa).

At 1–34 the chain is on the cytoplasmic side; the sequence is MVMLRTSFPSGSRTKAVRYHTLLRPILQQRFLRA. The chain crosses the membrane as a helical span at residues 35-55; sequence CFALLCLCCITSYWFSSGPFI. The Perinuclear space segment spans residues 56 to 58; that stretch reads SLS. Residues 59–79 traverse the membrane as a helical segment; it reads FWFLSLVRGFVCFFFMFPYFV. The Cytoplasmic portion of the chain corresponds to 80–106; sequence MLKSRMSTQKVTKQSLGAQLFYDFSPK. A helical membrane pass occupies residues 107 to 127; that stretch reads SFFLVYLTFAVSVSCLCLFYI. The Perinuclear space segment spans residues 128 to 153; that stretch reads KGHASSIRLQWIASPNAYELPSLNER. A helical membrane pass occupies residues 154–174; it reads FVYMTYFSHILILALTVEHLY. Residues 175–182 lie on the Cytoplasmic side of the membrane; the sequence is LQRDSPSR. Residues 183–203 traverse the membrane as a helical segment; the sequence is PVINVSFFNYIFQNLGWLIRF. Residues 204–256 are Perinuclear space-facing; sequence SFRKSIICCLFTPFSYAILRSYIWRFAALLTSCCRRIAYTKTPPKWPLSLRLL. A helical transmembrane segment spans residues 257 to 277; the sequence is LHSFWMAFIVCLTFQIALLIF. Over 278 to 601 the chain is Cytoplasmic; it reads RVFLYSGPMI…VLFREYKSNS (324 aa).

Belongs to the NDC1 family. Component of the nuclear pore complex (NPC). NPC constitutes the exclusive means of nucleocytoplasmic transport. NPCs allow the passive diffusion of ions and small molecules and the active, nuclear transport receptor-mediated bidirectional transport of macromolecules such as proteins, RNAs, ribonucleoparticles (RNPs), and ribosomal subunits across the nuclear envelope. Due to its 8-fold rotational symmetry, all subunits are present with 8 copies or multiples thereof.

It is found in the nucleus. Its subcellular location is the nuclear pore complex. The protein resides in the nucleus membrane. The protein localises to the cytoplasm. It localises to the cytoskeleton. It is found in the microtubule organizing center. Its subcellular location is the spindle pole body. Its function is as follows. Component of the nuclear pore complex (NPC) and the spindle pole body (SPB), which plays a key role in de novo assembly and insertion of both structures in the nuclear envelope. Involved in the formation of the bipolar mitotic spindle. Anchors the spindle pole body in the nuclear envelope. The polypeptide is Nuclear envelope protein ndc1 (cut11) (Schizosaccharomyces pombe (strain 972 / ATCC 24843) (Fission yeast)).